Here is a 178-residue protein sequence, read N- to C-terminus: Endothelin-2 (178 aa).

A signal peptide spans 1-24 (MPAPGVHHPNTASPFLKTVAAGKG). The propeptide occupies 25–46 (QVAAAPEHPAPSARARGSHLRP). Disulfide bonds link C49-C63 and C51-C59. A propeptide spanning residues 70 to 178 (VNTPGQTAPY…RPTHPRRRKR (109 aa)) is cleaved from the precursor. The endothelin-like stretch occupies residues 96-111 (CECSSGGDPACATFCH). Residues 156 to 178 (RFPRRPQEAGRQLRPTHPRRRKR) are disordered. The segment covering 169-178 (RPTHPRRRKR) has biased composition (basic residues).

The protein belongs to the endothelin/sarafotoxin family.

The protein resides in the secreted. Its function is as follows. Endothelins are endothelium-derived vasoconstrictor peptides. The chain is Endothelin-2 (EDN2) from Canis lupus familiaris (Dog).